Reading from the N-terminus, the 548-residue chain is Eukaryotic translation initiation factor 3 subunit D (548 aa).

At lysine 53 the chain carries N6-acetyllysine. Serine 161 is subject to Phosphoserine. An RNA gate region spans residues 285–299 (DFDLLTVSETANEPP). Residues 523-548 (PDGTFSSDEDEEEEEEEEEEEEEEET) are disordered. Residues serine 528 and serine 529 each carry the phosphoserine modification. A compositionally biased stretch (acidic residues) spans 529-548 (SDEDEEEEEEEEEEEEEEET).

Belongs to the eIF-3 subunit D family. In terms of assembly, component of the eukaryotic translation initiation factor 3 (eIF-3) complex, which is composed of 13 subunits: EIF3A, EIF3B, EIF3C, EIF3D, EIF3E, EIF3F, EIF3G, EIF3H, EIF3I, EIF3J, EIF3K, EIF3L and EIF3M. The eIF-3 complex appears to include 3 stable modules: module A is composed of EIF3A, EIF3B, EIF3G and EIF3I; module B is composed of EIF3F, EIF3H, and EIF3M; and module C is composed of EIF3C, EIF3D, EIF3E, EIF3K and EIF3L. EIF3C of module C binds EIF3B of module A and EIF3H of module B, thereby linking the three modules. EIF3J is a labile subunit that binds to the eIF-3 complex via EIF3B. The eIF-3 complex interacts with RPS6KB1 under conditions of nutrient depletion. Mitogenic stimulation leads to binding and activation of a complex composed of MTOR and RPTOR, leading to phosphorylation and release of RPS6KB1 and binding of EIF4B to eIF-3. As to quaternary structure, (Microbial infection) Interacts with Norwalk virus VPg protein.

The protein resides in the cytoplasm. Its function is as follows. mRNA cap-binding component of the eukaryotic translation initiation factor 3 (eIF-3) complex, a complex required for several steps in the initiation of protein synthesis of a specialized repertoire of mRNAs. The eIF-3 complex associates with the 40S ribosome and facilitates the recruitment of eIF-1, eIF-1A, eIF-2:GTP:methionyl-tRNAi and eIF-5 to form the 43S pre-initiation complex (43S PIC). The eIF-3 complex stimulates mRNA recruitment to the 43S PIC and scanning of the mRNA for AUG recognition. The eIF-3 complex is also required for disassembly and recycling of post-termination ribosomal complexes and subsequently prevents premature joining of the 40S and 60S ribosomal subunits prior to initiation. The eIF-3 complex specifically targets and initiates translation of a subset of mRNAs involved in cell proliferation, including cell cycling, differentiation and apoptosis, and uses different modes of RNA stem-loop binding to exert either translational activation or repression. In the eIF-3 complex, EIF3D specifically recognizes and binds the 7-methylguanosine cap of a subset of mRNAs. (Microbial infection) In case of FCV infection, plays a role in the ribosomal termination-reinitiation event leading to the translation of VP2. This Homo sapiens (Human) protein is Eukaryotic translation initiation factor 3 subunit D.